Reading from the N-terminus, the 97-residue chain is uncharacterized protein (97 aa).

This is an uncharacterized protein from Escherichia coli O6:K15:H31 (strain 536 / UPEC).